Consider the following 185-residue polypeptide: Inner membrane-spanning protein YciB (185 aa).

Helical transmembrane passes span 19–39 (LGGV…QIVI), 53–73 (IMAS…EIRY), 76–96 (WKVT…QFQF), 118–138 (TLNF…IYIS), and 149–169 (FKSF…GVYI).

The protein belongs to the YciB family.

It localises to the cell inner membrane. Functionally, plays a role in cell envelope biogenesis, maintenance of cell envelope integrity and membrane homeostasis. This is Inner membrane-spanning protein YciB from Haemophilus influenzae (strain PittEE).